A 289-amino-acid polypeptide reads, in one-letter code: Elongation factor Ts (289 aa).

The segment at 80–83 (TDFV) is involved in Mg(2+) ion dislocation from EF-Tu.

It belongs to the EF-Ts family.

It localises to the cytoplasm. Associates with the EF-Tu.GDP complex and induces the exchange of GDP to GTP. It remains bound to the aminoacyl-tRNA.EF-Tu.GTP complex up to the GTP hydrolysis stage on the ribosome. The chain is Elongation factor Ts from Francisella tularensis subsp. holarctica (strain LVS).